We begin with the raw amino-acid sequence, 284 residues long: Bifunctional protein FolD (284 aa).

Residues 166–168, Ser-191, and Ile-232 each bind NADP(+); that span reads GAS.

The protein belongs to the tetrahydrofolate dehydrogenase/cyclohydrolase family. As to quaternary structure, homodimer.

It catalyses the reaction (6R)-5,10-methylene-5,6,7,8-tetrahydrofolate + NADP(+) = (6R)-5,10-methenyltetrahydrofolate + NADPH. It carries out the reaction (6R)-5,10-methenyltetrahydrofolate + H2O = (6R)-10-formyltetrahydrofolate + H(+). Its pathway is one-carbon metabolism; tetrahydrofolate interconversion. Its function is as follows. Catalyzes the oxidation of 5,10-methylenetetrahydrofolate to 5,10-methenyltetrahydrofolate and then the hydrolysis of 5,10-methenyltetrahydrofolate to 10-formyltetrahydrofolate. This is Bifunctional protein FolD from Neisseria meningitidis serogroup A / serotype 4A (strain DSM 15465 / Z2491).